Consider the following 210-residue polypeptide: Small ribosomal subunit protein uS3 (210 aa).

Residues 38-106 (IRQFLKKRLY…EVFININEVR (69 aa)) form the KH type-2 domain.

The protein belongs to the universal ribosomal protein uS3 family. In terms of assembly, part of the 30S ribosomal subunit. Forms a tight complex with proteins S10 and S14.

In terms of biological role, binds the lower part of the 30S subunit head. Binds mRNA in the 70S ribosome, positioning it for translation. The polypeptide is Small ribosomal subunit protein uS3 (Trichlorobacter lovleyi (strain ATCC BAA-1151 / DSM 17278 / SZ) (Geobacter lovleyi)).